We begin with the raw amino-acid sequence, 876 residues long: Leucine--tRNA ligase (876 aa).

The 'HIGH' region signature appears at 42-52 (PYPSGKLHMGH). The 'KMSKS' region motif lies at 634 to 638 (KMGKS). Position 637 (Lys637) interacts with ATP.

This sequence belongs to the class-I aminoacyl-tRNA synthetase family.

It is found in the cytoplasm. The enzyme catalyses tRNA(Leu) + L-leucine + ATP = L-leucyl-tRNA(Leu) + AMP + diphosphate. This is Leucine--tRNA ligase from Variovorax paradoxus (strain S110).